The following is a 236-amino-acid chain: Ribosomal RNA small subunit methyltransferase G (236 aa).

S-adenosyl-L-methionine is bound by residues Gly80, 131-132 (AE), and Arg148.

Belongs to the methyltransferase superfamily. RNA methyltransferase RsmG family.

It localises to the cytoplasm. Specifically methylates the N7 position of a guanine in 16S rRNA. This is Ribosomal RNA small subunit methyltransferase G from Ureaplasma parvum serovar 3 (strain ATCC 27815 / 27 / NCTC 11736).